The sequence spans 475 residues: Eukaryotic translation initiation factor 2 subunit 3 (475 aa).

Positions 38 to 247 (QATINIGTIG…IVNKIPVPPR (210 aa)) constitute a tr-type G domain. The interval 47–54 (GHVAHGKS) is G1. Position 50 to 55 (50 to 55 (AHGKST)) interacts with GTP. The G2 stretch occupies residues 75 to 79 (NITIK). The tract at residues 133–136 (DCPG) is G3. Residues 189–192 (NKID) and 224–226 (SAQ) contribute to the GTP site. The segment at 189 to 192 (NKID) is G4. Residues 224-226 (SAQ) are G5. An interacts with CDC123 region spans residues 456 to 468 (GQIFGGKTITPVL).

This sequence belongs to the TRAFAC class translation factor GTPase superfamily. Classic translation factor GTPase family. EIF2G subfamily. In terms of assembly, eukaryotic translation initiation factor 2 eIF2 is a heterotrimeric complex composed of an alpha, a beta and a gamma subunit. The factors eIF-1, eIF-2, eIF-3, TIF5/eIF-5 and methionyl-tRNAi form a multifactor complex (MFC) that may bind to the 40S ribosome.

Its subcellular location is the cytoplasm. It localises to the cytosol. The catalysed reaction is GTP + H2O = GDP + phosphate + H(+). Functionally, as a subunit of eukaryotic initiation factor 2 eIF2, involved in the early steps of protein synthesis. In the presence of GTP, eIF-2 forms a ternary complex with initiator tRNA Met-tRNAi and then recruits the 40S ribosomal complex and initiation factors eIF-1, eIF-1A and eIF-3 to form the 43S pre-initiation complex (43S PIC), a step that determines the rate of protein translation. The 43S PIC binds to mRNA and scans downstream to the initiation codon, where it forms a 48S initiation complex by codon-anticodon base pairing. This leads to the displacement of eIF-1 to allow GTPase-activating protein (GAP) eIF-5-mediated hydrolysis of eIF2-bound GTP. Hydrolysis of GTP and release of Pi, which makes GTP hydrolysis irreversible, causes the release of the eIF-2-GDP binary complex from the 40S subunit, an event that is essential for the subsequent joining of the 60S ribosomal subunit to form an elongation-competent 80S ribosome. In order for eIF-2 to recycle and catalyze another round of initiation, the GDP bound to eIF-2 must be exchanged with GTP by way of a reaction catalyzed by GDP-GTP exchange factor (GEF) eIF-2B. The protein is Eukaryotic translation initiation factor 2 subunit 3 of Drosophila melanogaster (Fruit fly).